The following is a 309-amino-acid chain: Porphobilinogen deaminase (309 aa).

C242 carries the post-translational modification S-(dipyrrolylmethanemethyl)cysteine.

The protein belongs to the HMBS family. As to quaternary structure, monomer. The cofactor is dipyrromethane.

It catalyses the reaction 4 porphobilinogen + H2O = hydroxymethylbilane + 4 NH4(+). Its pathway is porphyrin-containing compound metabolism; protoporphyrin-IX biosynthesis; coproporphyrinogen-III from 5-aminolevulinate: step 2/4. Its function is as follows. Tetrapolymerization of the monopyrrole PBG into the hydroxymethylbilane pre-uroporphyrinogen in several discrete steps. The sequence is that of Porphobilinogen deaminase from Legionella pneumophila (strain Lens).